The chain runs to 153 residues: Peptidyl-prolyl cis-trans isomerase FKBP15-1 (153 aa).

An N-terminal signal peptide occupies residues Met-1 to Ala-25. The PPIase FKBP-type domain occupies Gly-52 to Asn-140. Residues Lys-150 to Leu-153 carry the Prevents secretion from ER motif.

It belongs to the FKBP-type PPIase family.

The protein localises to the endoplasmic reticulum lumen. The catalysed reaction is [protein]-peptidylproline (omega=180) = [protein]-peptidylproline (omega=0). In terms of biological role, PPIases accelerate the folding of proteins. It catalyzes the cis-trans isomerization of proline imidic peptide bonds in oligopeptides. The sequence is that of Peptidyl-prolyl cis-trans isomerase FKBP15-1 (FKBP15-1) from Arabidopsis thaliana (Mouse-ear cress).